A 689-amino-acid polypeptide reads, in one-letter code: MIRMTKRKILVTSALPYANAGLHLGHMLEQIQTDIWVRFQKMRGHECYYVCADDTHGAPIMLAAEKRGITPEQLVNEVRELHVADSQGFLIGHDNYYSTNSPENKALAEQVYLALKADDKIACRTIEQLFDPEKQMFLPDRFVKGECPKCSAKDQYGDNCEVCGATYAPTELKNPYSAVSGAKPVLKTSEHFFFRLGECADFLKAWTSGASRRADGAVQPHLQPESLNKMNEWIGGGLQDWDISRDAPYFGFEIPGAPGKYFYVWLDAPIGYMASFKNLCERLNLNFDEWFAKDSQTEMYHFIGKDILYFHALFWPAMLNYSGLRAPTGVFAHGFLTVDGQKMSKSRGTFIQAKSYLDCGLNPEWMRYYIAAKLNGRIEDIDLNLNDFVARVNSDLVGKFVNIASRSAGFIAKRFDGMLAAQVSDGEILAKLQAAAEELAAAYEAREYAKALRDVMALADIVNGYVDANKPWELAKQEGQDARLQDVCTVLVNAFRLLAIYLKPVLPKLAEGVEAFLDVAPLSWHDAETLLLGKKINAYQHLMQRIDPALIDKLIEANKQNMQAIQDAPAAAAHEPLAETIKIDDFAKVDLRVGKVLECNFVEGSDKLLQFKVDLGFETRNIFSGIRKAYQEPEKLVGRHVIVVANLAERKMRFGVSQGMIVCASGVDDSEGLFLLDVDAGVKPGMRVG.

A 'HIGH' region motif is present at residues 16–26 (PYANAGLHLGH). Residues C147, C150, C160, and C163 each contribute to the Zn(2+) site. The 'KMSKS' region motif lies at 342-346 (KMSKS). K345 contributes to the ATP binding site. In terms of domain architecture, tRNA-binding spans 585-689 (DFAKVDLRVG…AGVKPGMRVG (105 aa)).

It belongs to the class-I aminoacyl-tRNA synthetase family. MetG type 1 subfamily. As to quaternary structure, homodimer. Zn(2+) serves as cofactor.

It localises to the cytoplasm. It carries out the reaction tRNA(Met) + L-methionine + ATP = L-methionyl-tRNA(Met) + AMP + diphosphate. Its function is as follows. Is required not only for elongation of protein synthesis but also for the initiation of all mRNA translation through initiator tRNA(fMet) aminoacylation. This is Methionine--tRNA ligase from Chromobacterium violaceum (strain ATCC 12472 / DSM 30191 / JCM 1249 / CCUG 213 / NBRC 12614 / NCIMB 9131 / NCTC 9757 / MK).